The primary structure comprises 401 residues: Divinyl chlorophyllide a 8-vinyl-reductase, chloroplastic (401 aa).

The span at Met1–Leu10 shows a compositional bias: polar residues. Residues Met1–Arg26 form a disordered region. Residues Met1 to Pro54 constitute a chloroplast transit peptide.

Its subcellular location is the plastid. It is found in the chloroplast. The enzyme catalyses protochlorophyllide a + NADP(+) = 3,8-divinyl protochlorophyllide a + NADPH + H(+). It participates in porphyrin-containing compound metabolism; chlorophyll biosynthesis. In terms of biological role, catalyzes the conversion of divinyl chlorophyllide to monovinyl chlorophyllide. Reduces the 8-vinyl group of the tetrapyrrole to an ethyl group using NADPH as the reductant. Can use (3,8-divinyl)-chlorophyllide a (DV-Chlidea) &gt; (3,8-divinyl)-chlorophyll a (DV-Chla) &gt; (3,8-divinyl)-protochlorophyllide a (DV-Pchlidea) &gt; (3,8-divinyl)-magnesium-protoporphyrin IX monomethyl ester (DV-MPE) &gt; (3,8-divinyl)-magnesium-protoporphyrin IX (DV-Mg-Proto) as substrates. The chain is Divinyl chlorophyllide a 8-vinyl-reductase, chloroplastic (DVR) from Zea mays (Maize).